Reading from the N-terminus, the 304-residue chain is Undecaprenyl-diphosphatase (304 aa).

The next 8 membrane-spanning stretches (helical) occupy residues 5–25 (FLFI…EFVP), 47–67 (GFPE…VVVL), 72–92 (ISSS…LKTS), 111–131 (FGIN…LFHD), 137–157 (LFST…LIVI), 209–231 (ISGL…AMVG), 248–268 (TNWI…LVVI), and 283–303 (FAIY…TKVI).

The protein belongs to the UppP family.

It is found in the cell membrane. It catalyses the reaction di-trans,octa-cis-undecaprenyl diphosphate + H2O = di-trans,octa-cis-undecaprenyl phosphate + phosphate + H(+). Catalyzes the dephosphorylation of undecaprenyl diphosphate (UPP). Confers resistance to bacitracin. This chain is Undecaprenyl-diphosphatase, found in Clostridium perfringens (strain 13 / Type A).